The following is a 485-amino-acid chain: Glutamyl-tRNA(Gln) amidotransferase subunit A (485 aa).

Residues Lys-79 and Ser-154 each act as charge relay system in the active site. Ser-178 functions as the Acyl-ester intermediate in the catalytic mechanism.

Belongs to the amidase family. GatA subfamily. As to quaternary structure, heterotrimer of A, B and C subunits.

The enzyme catalyses L-glutamyl-tRNA(Gln) + L-glutamine + ATP + H2O = L-glutaminyl-tRNA(Gln) + L-glutamate + ADP + phosphate + H(+). Allows the formation of correctly charged Gln-tRNA(Gln) through the transamidation of misacylated Glu-tRNA(Gln) in organisms which lack glutaminyl-tRNA synthetase. The reaction takes place in the presence of glutamine and ATP through an activated gamma-phospho-Glu-tRNA(Gln). This chain is Glutamyl-tRNA(Gln) amidotransferase subunit A, found in Staphylococcus carnosus (strain TM300).